A 196-amino-acid polypeptide reads, in one-letter code: Endoribonuclease YbeY (196 aa).

Residues His120, His124, and His130 each coordinate Zn(2+).

This sequence belongs to the endoribonuclease YbeY family. Zn(2+) serves as cofactor.

The protein resides in the cytoplasm. Single strand-specific metallo-endoribonuclease involved in late-stage 70S ribosome quality control and in maturation of the 3' terminus of the 16S rRNA. This chain is Endoribonuclease YbeY, found in Corynebacterium glutamicum (strain ATCC 13032 / DSM 20300 / JCM 1318 / BCRC 11384 / CCUG 27702 / LMG 3730 / NBRC 12168 / NCIMB 10025 / NRRL B-2784 / 534).